Reading from the N-terminus, the 398-residue chain is Phospholipase C (398 aa).

A signal peptide spans 1–28 (MKRKICKALICATLATSLWAGASTKVYA). Zn(2+) contacts are provided by W29, H39, D84, H96, H154, D158, H164, H176, and E180. The Zn-dependent PLC domain occupies 29–278 (WDGKIDGTGT…HDVSEGNDPS (250 aa)). Positions 275–283 (NDPSVGKNV) are linker. One can recognise a PLAT domain in the interval 284–398 (KELVAYISTS…ISGNSTYNIK (115 aa)). Ca(2+) is bound by residues D297, G299, T300, D301, D321, N322, G324, N325, D326, D364, and A365.

Belongs to the bacterial zinc-metallophospholipase C family. Ca(2+) serves as cofactor. Requires Zn(2+) as cofactor.

It is found in the secreted. It catalyses the reaction a 1,2-diacyl-sn-glycero-3-phosphocholine + H2O = phosphocholine + a 1,2-diacyl-sn-glycerol + H(+). Its function is as follows. Bacterial hemolysins are exotoxins that attack blood cell membranes and cause cell rupture. Constitutes an essential virulence factor in gas gangrene. Binds to eukaryotic membranes where it hydrolyzes both phosphatidylcholine and sphingomyelin. The diacylglycerol produced can activate both the arachidonic acid pathway, leading to modulation of the inflammatory response cascade and thrombosis, and protein kinase C, leading to activation of eukaryotic phospholipases and further membrane damage. Acts on human and mouse erythrocytes, but not on rabbit or horse erythrocytes. This chain is Phospholipase C (plc), found in Clostridium perfringens (strain 13 / Type A).